The sequence spans 121 residues: Small ribosomal subunit protein uS13 (121 aa).

The disordered stretch occupies residues 92–121; the sequence is RKGLPMRGQRTRTNARTRKGPRRAAQALKK.

Belongs to the universal ribosomal protein uS13 family. As to quaternary structure, part of the 30S ribosomal subunit. Forms a loose heterodimer with protein S19. Forms two bridges to the 50S subunit in the 70S ribosome.

Located at the top of the head of the 30S subunit, it contacts several helices of the 16S rRNA. In the 70S ribosome it contacts the 23S rRNA (bridge B1a) and protein L5 of the 50S subunit (bridge B1b), connecting the 2 subunits; these bridges are implicated in subunit movement. Contacts the tRNAs in the A and P-sites. The protein is Small ribosomal subunit protein uS13 of Burkholderia cenocepacia (strain HI2424).